Here is a 447-residue protein sequence, read N- to C-terminus: Glutamate--tRNA ligase 1 (447 aa).

The 'HIGH' region motif lies at 10 to 20; it reads PSPTGMLHVGN. The short motif at 240-244 is the 'KMSKS' region element; that stretch reads KISKR. Lysine 243 is an ATP binding site.

Belongs to the class-I aminoacyl-tRNA synthetase family. Glutamate--tRNA ligase type 1 subfamily. In terms of assembly, monomer.

Its subcellular location is the cytoplasm. It catalyses the reaction tRNA(Glu) + L-glutamate + ATP = L-glutamyl-tRNA(Glu) + AMP + diphosphate. Its function is as follows. Catalyzes the attachment of glutamate to tRNA(Glu) in a two-step reaction: glutamate is first activated by ATP to form Glu-AMP and then transferred to the acceptor end of tRNA(Glu). This Rickettsia rickettsii (strain Sheila Smith) protein is Glutamate--tRNA ligase 1.